Reading from the N-terminus, the 354-residue chain is Methylthioribose-1-phosphate isomerase (354 aa).

Asp-246 serves as the catalytic Proton donor.

This sequence belongs to the eIF-2B alpha/beta/delta subunits family. MtnA subfamily.

Its subcellular location is the cytoplasm. The protein localises to the nucleus. The catalysed reaction is 5-(methylsulfanyl)-alpha-D-ribose 1-phosphate = 5-(methylsulfanyl)-D-ribulose 1-phosphate. It functions in the pathway amino-acid biosynthesis; L-methionine biosynthesis via salvage pathway; L-methionine from S-methyl-5-thio-alpha-D-ribose 1-phosphate: step 1/6. Functionally, catalyzes the interconversion of methylthioribose-1-phosphate (MTR-1-P) into methylthioribulose-1-phosphate (MTRu-1-P). The protein is Methylthioribose-1-phosphate isomerase (mri1) of Xenopus tropicalis (Western clawed frog).